The sequence spans 918 residues: Isoleucine--tRNA ligase (918 aa).

A 'HIGH' region motif is present at residues 57-67 (PYANGDIHIGH). Glu-568 is a binding site for L-isoleucyl-5'-AMP. Residues 609–613 (KMSKS) carry the 'KMSKS' region motif. Lys-612 contributes to the ATP binding site. Residues Cys-894, Cys-897, Cys-909, and Cys-912 each contribute to the Zn(2+) site.

Belongs to the class-I aminoacyl-tRNA synthetase family. IleS type 1 subfamily. Monomer. Zn(2+) serves as cofactor.

It is found in the cytoplasm. It catalyses the reaction tRNA(Ile) + L-isoleucine + ATP = L-isoleucyl-tRNA(Ile) + AMP + diphosphate. In terms of biological role, catalyzes the attachment of isoleucine to tRNA(Ile). As IleRS can inadvertently accommodate and process structurally similar amino acids such as valine, to avoid such errors it has two additional distinct tRNA(Ile)-dependent editing activities. One activity is designated as 'pretransfer' editing and involves the hydrolysis of activated Val-AMP. The other activity is designated 'posttransfer' editing and involves deacylation of mischarged Val-tRNA(Ile). This Sulfurovum sp. (strain NBC37-1) protein is Isoleucine--tRNA ligase.